The sequence spans 107 residues: Anti-adapter protein IraM (107 aa).

It belongs to the IraM/RssC family.

Its subcellular location is the cytoplasm. Inhibits RpoS proteolysis by regulating RssB activity, thereby increasing the stability of the sigma stress factor RpoS during magnesium starvation. This is Anti-adapter protein IraM from Escherichia coli O17:K52:H18 (strain UMN026 / ExPEC).